The following is a 95-amino-acid chain: SMAD5 antisense gene protein 1 (95 aa).

Disordered regions lie at residues 1-24 (MHKQPKLLPPPATPPPPPQSSSWS) and 43-70 (SSPTGLPKPHSPMPSPPEPEHSVGKPAN). The segment covering 7-19 (LLPPPATPPPPPQ) has biased composition (pro residues).

Expressed in fetal tissues.

This chain is SMAD5 antisense gene protein 1 (SMAD5-AS1), found in Homo sapiens (Human).